The chain runs to 458 residues: ATP synthase subunit beta (458 aa).

An ATP-binding site is contributed by 148 to 155 (GGAGVGKT).

Belongs to the ATPase alpha/beta chains family. F-type ATPases have 2 components, CF(1) - the catalytic core - and CF(0) - the membrane proton channel. CF(1) has five subunits: alpha(3), beta(3), gamma(1), delta(1), epsilon(1). CF(0) has three main subunits: a(1), b(2) and c(9-12). The alpha and beta chains form an alternating ring which encloses part of the gamma chain. CF(1) is attached to CF(0) by a central stalk formed by the gamma and epsilon chains, while a peripheral stalk is formed by the delta and b chains.

Its subcellular location is the cell inner membrane. It carries out the reaction ATP + H2O + 4 H(+)(in) = ADP + phosphate + 5 H(+)(out). In terms of biological role, produces ATP from ADP in the presence of a proton gradient across the membrane. The catalytic sites are hosted primarily by the beta subunits. This Shewanella loihica (strain ATCC BAA-1088 / PV-4) protein is ATP synthase subunit beta.